A 90-amino-acid chain; its full sequence is Small ribosomal subunit protein bS16 (90 aa).

It belongs to the bacterial ribosomal protein bS16 family.

In Shouchella clausii (strain KSM-K16) (Alkalihalobacillus clausii), this protein is Small ribosomal subunit protein bS16.